Reading from the N-terminus, the 266-residue chain is Decarboxylase tropJ (266 aa).

The Proton acceptor role is filled by Glu-80. Zn(2+) contacts are provided by Glu-80, His-99, His-101, and His-180.

This sequence belongs to the aldolase class II family. It depends on Zn(2+) as a cofactor.

It functions in the pathway secondary metabolite biosynthesis. In terms of biological role, decarboxylase; part of the gene cluster that mediates the biosynthesis of the tropolone class of fungal maleic anhydrides. The pathway begins with the synthesis of 3-methylorcinaldehyde by the non-reducing polyketide synthase (PKS) tropA. 3-methylorcinaldehyde is the substrate for the FAD-dependent monooxygenase tropB to yield a dearomatized hydroxycyclohexadione. The 2-oxoglutarate-dependent dioxygenase tropC then performs the oxidative ring expansion to provide the first tropolone metabolite stipitaldehyde. Trop D converts stipitaldehyde into stipitacetal which is in turn converted to stipitalide by the short-chain dehydrogenase/reductase tropE. The next steps involve tropF, tropG, tropH, tropI and tropJ to form successive tropolone maleic anhydrides including stipitaldehydic, stipitatonic and stipitatic acids. The protein is Decarboxylase tropJ of Talaromyces stipitatus (strain ATCC 10500 / CBS 375.48 / QM 6759 / NRRL 1006) (Penicillium stipitatum).